Reading from the N-terminus, the 156-residue chain is Transcription factor MafK (156 aa).

The disordered stretch occupies residues 1-21 (MTTNPKPNKALKVKEESGENA). The tract at residues 51 to 76 (RLKQRRRTLKNRGYAASCRIKRVTQK) is basic motif. Positions 51–114 (RLKQRRRTLK…DALRSKYEAL (64 aa)) constitute a bZIP domain. The tract at residues 79 to 93 (LERQRVELQQEVEKL) is leucine-zipper.

This sequence belongs to the bZIP family. Maf subfamily. As to quaternary structure, homodimer or heterodimer.

Its subcellular location is the nucleus. In terms of biological role, since they lack a putative transactivation domain, the small Mafs behave as transcriptional repressors when they dimerize among themselves. However, they act as transcriptional activators by dimerizing with other (usually larger) basic-zipper proteins and recruiting them to specific DNA-binding sites. Small Maf proteins heterodimerize with Fos and may act as competitive repressors of the NF-E2 transcription factor. In Gallus gallus (Chicken), this protein is Transcription factor MafK (MAFK).